We begin with the raw amino-acid sequence, 455 residues long: MGLSTVPDLLLPLVLLELLVGIYPSGVIGLVPHLGDREKRDSVCPQGKYIHPQNNSICCTKCHKGTYLYNDCPGPGQDTDCRECESGSFTASENHLRHCLSCSKCRKEMGQVEISSCTVDRDTVCGCRKNQYRHYWSENLFQCFNCSLCLNGTVHLSCQEKQNTVCTCHAGFFLRENECVSCSNCKKSLECTKLCLPQIENVKGTEDSGTTVLLPLVIFFGLCLLSLLFIGLMYRYQRWKSKLYSIVCGKSTPEKEGELEGTTTKPLAPNPSFSPTPGFTPTLGFSPVPSSTFTSSSTYTPGDCPNFAAPRREVAPPYQGADPILATALASDPIPNPLQKWEDSAHKPQSLDTDDPATLYAVVENVPPLRWKEFVRRLGLSDHEIDRLELQNGRCLREAQYSMLATWRRRTPRREATLELLGRVLRDMDLLGCLEDIEEALCGPAALPPAPSLLR.

A signal peptide spans 1–29 (MGLSTVPDLLLPLVLLELLVGIYPSGVIG). Over 30–211 (LVPHLGDREK…VKGTEDSGTT (182 aa)) the chain is Extracellular. TNFR-Cys repeat units lie at residues 43–82 (VCPQ…TDCR), 83–125 (ECES…DTVC), 126–166 (GCRK…NTVC), and 167–196 (TCHA…KLCL). Intrachain disulfides connect cysteine 44–cysteine 58, cysteine 59–cysteine 72, cysteine 62–cysteine 81, cysteine 84–cysteine 99, cysteine 102–cysteine 117, cysteine 105–cysteine 125, and cysteine 127–cysteine 143. Asparagine 54 carries an N-linked (GlcNAc...) asparagine glycan. N-linked (GlcNAc...) asparagine glycans are attached at residues asparagine 145 and asparagine 151. Intrachain disulfides connect cysteine 146-cysteine 158, cysteine 149-cysteine 166, cysteine 168-cysteine 179, cysteine 182-cysteine 195, and cysteine 185-cysteine 191. Residues 212-232 (VLLPLVIFFGLCLLSLLFIGL) form a helical membrane-spanning segment. The Cytoplasmic portion of the chain corresponds to 233–455 (MYRYQRWKSK…ALPPAPSLLR (223 aa)). A disordered region spans residues 254–273 (EKEGELEGTTTKPLAPNPSF). Residues 338–348 (LQKWEDSAHKP) form an N-SMase activation domain (NSD) region. The 86-residue stretch at 356–441 (PATLYAVVEN…GCLEDIEEAL (86 aa)) folds into the Death domain. A glycan ((Microbial infection) N-beta-linked (GlcNAc) arginine) is linked at arginine 376.

Binding of TNF to the extracellular domain leads to homotrimerization. The aggregated death domains provide a novel molecular interface that interacts specifically with the death domain of TRADD. Various TRADD-interacting proteins such as TRAFS, RIPK1 and possibly FADD, are recruited to the complex by their association with TRADD. This complex activates at least two distinct signaling cascades, apoptosis and NF-kappa-B signaling. Interacts with BAG4, BABAM2, FEM1B, GRB2, SQSTM1 and TRPC4AP. Interacts directly with NOL3 (via CARD domain); inhibits TNF-signaling pathway. Interacts with SH3RF2, TRADD and RIPK1. SH3RF2 facilitates the recruitment of RIPK1 and TRADD to TNFRSF1A in a TNF-alpha-dependent process. Interacts with PGLYRP1; this interaction is important for cell death induction. Interacts (via death domain) with MADD (via death domain). In terms of assembly, (Microbial infection) Interacts with mumps virus protein SH; this interaction inhibits downstream NF-kappa-B pathway activation. As to quaternary structure, (Microbial infection) Interacts with HCV core protein. (Microbial infection) Interacts with human cytomegalovirus/HHV-5 protein UL138. In terms of assembly, (Microbial infection) Interacts with host TNFRSF1A; this interaction leads to the stimulation of both surface expression and shedding of TNFRSF1A. In terms of processing, the soluble form is produced from the membrane form by proteolytic processing. (Microbial infection) Glycosylated at Arg-376 by enteropathogenic E.coli protein NleB1 and S.typhimurium protein Ssek3: arginine GlcNAcylation prevents homotypic/heterotypic death domain interactions.

Its subcellular location is the cell membrane. It is found in the golgi apparatus membrane. It localises to the secreted. Functionally, receptor for TNFSF2/TNF-alpha and homotrimeric TNFSF1/lymphotoxin-alpha. The adapter molecule FADD recruits caspase-8 to the activated receptor. The resulting death-inducing signaling complex (DISC) performs caspase-8 proteolytic activation which initiates the subsequent cascade of caspases (aspartate-specific cysteine proteases) mediating apoptosis. Contributes to the induction of non-cytocidal TNF effects including anti-viral state and activation of the acid sphingomyelinase. The polypeptide is Tumor necrosis factor receptor superfamily member 1A (TNFRSF1A) (Homo sapiens (Human)).